A 317-amino-acid chain; its full sequence is Large ribosomal subunit protein uL10 (317 aa).

Residue tyrosine 24 is modified to Phosphotyrosine. Phosphothreonine is present on threonine 59. Residue lysine 264 forms a Glycyl lysine isopeptide (Lys-Gly) (interchain with G-Cter in ubiquitin) linkage. Residues 294-317 are disordered; that stretch reads APAKVEAKEESEESDEDMGFGLFD. Residue lysine 297 forms a Glycyl lysine isopeptide (Lys-Gly) (interchain with G-Cter in SUMO1); alternate linkage. A Glycyl lysine isopeptide (Lys-Gly) (interchain with G-Cter in SUMO2); alternate cross-link involves residue lysine 297. Acidic residues predominate over residues 302 to 311; the sequence is EESEESDEDM. Serine 304 and serine 307 each carry phosphoserine.

Belongs to the universal ribosomal protein uL10 family. In terms of assembly, P0 forms a pentameric complex by interaction with dimers of P1 and P2. Identified in a IGF2BP1-dependent mRNP granule complex containing untranslated mRNAs. Interacts with APEX1. Interacts with FMR1 isoform 6. Post-translationally, ubiquitinated at Lys-264 by RNF14 and RNF25 in response to ribosome collisions (ribosome stalling).

It localises to the nucleus. It is found in the cytoplasm. Functionally, ribosomal protein P0 is the functional equivalent of E.coli protein L10. The protein is Large ribosomal subunit protein uL10 (RPLP0) of Homo sapiens (Human).